Here is a 1012-residue protein sequence, read N- to C-terminus: Structural polyprotein (1012 aa).

D30 lines the a divalent metal cation pocket. A Peptidase S50 domain is found at 513 to 755; that stretch reads ADKGYEVVAN…AGRQYHLAMA (243 aa). The active-site Nucleophile is S652. Residue K692 is part of the active site. Residues 969 to 1012 are disordered; that stretch reads AMELKHRNPRRAPPKPKPKPNAPTQRPPGRLGRWIRTVSDEDLE. Residues 975–986 show a composition bias toward basic residues; it reads RNPRRAPPKPKP. Positions 1003–1012 are interaction with VP1 protein; the sequence is IRTVSDEDLE.

In terms of assembly, homotrimer. A central divalent metal stabilizes the VP2 trimer. Interacts with host ITGA4/ITGB1. Homodimer. Interacts (via C-terminus) with VP1 in the cytoplasm. Interacts with VP2. Specific enzymatic cleavages yield mature proteins. The capsid assembly seems to be regulated by polyprotein processing. The protease VP4 cleaves itself off the polyprotein, thus releasing pre-VP2 and VP3 within the infected cell. During capsid assembly, the C-terminus of pre-VP2 is further processed by VP4, giving rise to VP2, the external capsid protein and three small peptides that all stay closely associated with the capsid.

Its subcellular location is the virion. The protein localises to the host cytoplasm. Its function is as follows. Capsid protein VP2 self assembles to form an icosahedral capsid with a T=13 symmetry, about 70 nm in diameter, and consisting of 260 VP2 trimers. The capsid encapsulates the genomic dsRNA. VP2 is also involved in attachment and entry into the host cell by interacting with host ITGA4/ITGB1. Functionally, the precursor of VP2 plays an important role in capsid assembly. First, pre-VP2 and VP2 oligomers assemble to form a procapsid. Then, the pre-VP2 intermediates may be processed into VP2 proteins by proteolytic cleavage mediated by VP4 to obtain the mature virion. The final capsid is composed of pentamers and hexamers but VP2 has a natural tendency to assemble into all-pentameric structures. Therefore pre-VP2 may be required to allow formation of the hexameric structures. Protease VP4 is a serine protease that cleaves the polyprotein into its final products. Pre-VP2 is first partially cleaved, and may be completely processed by VP4 upon capsid maturation. In terms of biological role, capsid protein VP3 plays a key role in virion assembly by providing a scaffold for the capsid made of VP2. May self-assemble to form a T=4-like icosahedral inner-capsid composed of at least 180 trimers. Plays a role in genomic RNA packaging by recruiting VP1 into the capsid and interacting with the dsRNA genome segments to form a ribonucleoprotein complex. Additionally, the interaction of the VP3 C-terminal tail with VP1 removes the inherent structural blockade of the polymerase active site. Thus, VP3 can also function as a transcriptional activator. Its function is as follows. Structural peptide 1 is a small peptide derived from pre-VP2 C-terminus. It destabilizes and perforates cell membranes, suggesting a role during entry. Functionally, structural peptide 2 is a small peptide derived from pVP2 C-terminus. It is not essential for the virus viability, but viral growth is affected when missing. Structural peptide 3 is a small peptide derived from pVP2 C-terminus. It is not essential for the virus viability, but viral growth is affected when missing. In terms of biological role, structural peptide 4 is a small peptide derived from pVP2 C-terminus. It is essential for the virus viability. This is Structural polyprotein from Avian infectious bursal disease virus (strain STC) (IBDV).